A 475-amino-acid polypeptide reads, in one-letter code: MELDAILDNLSDEEQIELLELLEEEENYRNTHLLYEFTPYSKQREFIDAGHDYQSDVLWLVTSLVSHLLALLKSRFTLPGDTRERKVIRLMVNMAESGKVSVSMSQLSSGIGGETNETVTKTTQRILCGRIEENDEPGYGSPKEDSSWEKSSVLLILLIIFSLSHHRLMVLKMHSICYFKHTRRHRHAAGDTITAYGLTKRLPYSIYAEGLTRTNKYGQFSILTFTPLMGMSDGVTKFLKNPSKSQKVVNMTIYDAEHYTDEQKEQIIASYPEHEREARARGIPTMGSGRIFQIPEETIKCQPFECPDHFYVIDAQDFGWNHPQAHIQLWWDKDADVFYLARVWKKSENTAVQAWGAVKSWANKIPVAWPHDGHQHEKGGGEQLKTQYADAGFSMLPDHATFPDGGNSVESGISELRDLMLEGRFKVFNTCEPFFEEFRLYHRDENGKIVKTNDDVLDATRYGYMMRLRQDDARY.

Residues 1–58 (MELDAILDNLSDEEQIELLELLEEEENYRNTHLLYEFTPYSKQREFIDAGHDYQSDVL) form an interaction with the terminase small subunit region. The interval 1-282 (MELDAILDNL…EHEREARARG (282 aa)) is ATPase activity. Residues 308 to 475 (DHFYVIDAQD…MRLRQDDARY (168 aa)) form a nuclease activity region. Asp-317 and Asp-455 together coordinate Mg(2+).

Belongs to the Lederbergvirus large terminase family. As to quaternary structure, interacts with the terminase small subunit; the active complex is composed of dimer of terminase large subunits and a nonamer ring of terminase small subunits. Interacts with the portal protein; this interaction allows the packaging of viral DNA. Requires Mg(2+) as cofactor.

Its function is as follows. The terminase large subunit acts as an ATP driven molecular motor necessary for viral DNA translocation into empty capsids and as an endonuclease that cuts the viral genome to initiate and to end a packaging reaction. The terminase lies at a unique vertex of the procapsid and is composed of two subunits, a small terminase subunit involved in viral DNA recognition (packaging 'pac' sequence), and a large terminase subunit possessing endonucleolytic and ATPase activities. Both terminase subunits heterooligomerize and are docked on the portal protein to form the packaging machine. The terminase large subunit exhibits endonuclease activity and cleaves the viral genome concatemer once the capsid is full (headful packaging). Once the capsid is packaged with the DNA, the terminase complex is substituted by the tail. This chain is Terminase, large subunit (2), found in Salmonella (Bacteriophage LP7).